The chain runs to 306 residues: Agmatinase (306 aa).

Residues histidine 126, aspartate 149, histidine 151, aspartate 153, aspartate 230, and aspartate 232 each coordinate Mn(2+).

This sequence belongs to the arginase family. Agmatinase subfamily. Requires Mn(2+) as cofactor.

The catalysed reaction is agmatine + H2O = urea + putrescine. It functions in the pathway amine and polyamine biosynthesis; putrescine biosynthesis via agmatine pathway; putrescine from agmatine: step 1/1. Catalyzes the formation of putrescine from agmatine. The sequence is that of Agmatinase from Escherichia coli O1:K1 / APEC.